We begin with the raw amino-acid sequence, 1142 residues long: Error-prone DNA polymerase (1142 aa).

The disordered stretch occupies residues 291 to 361; that stretch reads TSSPAQAARE…GTGAAAGTDR (71 aa). 2 stretches are compositionally biased toward low complexity: residues 311–320 and 327–344; these read LRASLPAERP and GPAASAPEGPASSEPGEP. Over residues 345-355 the composition is skewed to gly residues; sequence GLAGAGGGTGA.

This sequence belongs to the DNA polymerase type-C family. DnaE2 subfamily.

The protein resides in the cytoplasm. It carries out the reaction DNA(n) + a 2'-deoxyribonucleoside 5'-triphosphate = DNA(n+1) + diphosphate. DNA polymerase involved in damage-induced mutagenesis and translesion synthesis (TLS). It is not the major replicative DNA polymerase. This Anaeromyxobacter dehalogenans (strain 2CP-1 / ATCC BAA-258) protein is Error-prone DNA polymerase.